A 240-amino-acid polypeptide reads, in one-letter code: Putative F-box/kelch-repeat protein At2g29860 (240 aa).

The interval 1–20 (MVLLSEIPGGSNGDDPNMNP) is disordered. One can recognise an F-box domain in the interval 17–63 (NMNPQELPEELIESIVAPIPRCYYPSLSLLSRAFRHVITSQQLFVTR). 2 Kelch repeats span residues 120-165 (KIYV…VIDG) and 167-212 (IYVI…VTYA).

The polypeptide is Putative F-box/kelch-repeat protein At2g29860 (Arabidopsis thaliana (Mouse-ear cress)).